Consider the following 154-residue polypeptide: Toxin YhaV (154 aa).

In terms of assembly, homohexamer; forms a complex with PrlF (SohA) with stoichiometry PrlF(2)-YhaV(4), possibly as a YhaV(2)-PrlF(2)-YhaV(2) complex like the MazFE complex. May dimerize in solution.

Toxic component of a type II toxin-antitoxin (TA) system. Has RNase activity in vitro. Acts as a transcription factor. The YhaV/PrlF complex binds the prlF-yhaV operon, probably negatively regulating its expression. This Escherichia coli O6:H1 (strain CFT073 / ATCC 700928 / UPEC) protein is Toxin YhaV (yhaV).